Consider the following 656-residue polypeptide: Receptor-type tyrosine-protein phosphatase R (656 aa).

The N-terminal stretch at 1-23 is a signal peptide; it reads MRRAVGFPALCLLLNLHAAGCFS. Residue serine 23 is glycosylated (O-linked (Xyl...) (chondroitin sulfate) serine). Topologically, residues 25–225 are extracellular; it reads NNDHFLAIRQ…HEADKIWSKE (201 aa). The N-linked (GlcNAc...) asparagine glycan is linked to asparagine 128. Residues 226–248 form a helical membrane-spanning segment; sequence GFYAVVIFLSIFIIIVTCLMIIY. Residues 249–656 lie on the Cytoplasmic side of the membrane; sequence RLKERLQLSF…ESRLSPETVQ (408 aa). Serine 271 carries the post-translational modification Phosphoserine. Serine 338 is subject to Phosphoserine; by PKA. A Tyrosine-protein phosphatase domain is found at 392-646; that stretch reads LQSEFMEIPM…EFVHHALCLF (255 aa). Substrate contacts are provided by residues aspartate 553, 587–593, and glutamine 631; that span reads CSAGIGR. The Phosphocysteine intermediate role is filled by cysteine 587.

The protein belongs to the protein-tyrosine phosphatase family. Receptor class 7 subfamily. Interacts with MAPKs. As to expression, widely expressed in the brain, most abundant in cerebellum, midbrain, cerebral cortex and hippocampus. Also expressed in heart and skeletal muscle.

The protein resides in the cytoplasm. It localises to the cell membrane. It catalyses the reaction O-phospho-L-tyrosyl-[protein] + H2O = L-tyrosyl-[protein] + phosphate. Functionally, sequesters mitogen-activated protein kinases (MAPKs) such as MAPK1, MAPK3 and MAPK14 in the cytoplasm in an inactive form. The MAPKs bind to a dephosphorylated kinase interacting motif, phosphorylation of which by the protein kinase A complex releases the MAPKs for activation and translocation into the nucleus. This chain is Receptor-type tyrosine-protein phosphatase R (Ptprr), found in Rattus norvegicus (Rat).